The following is a 309-amino-acid chain: Serine/threonine-protein phosphatase 2A catalytic subunit alpha isoform (309 aa).

4 residues coordinate Mn(2+): aspartate 57, histidine 59, aspartate 85, and asparagine 117. Residues aspartate 57, histidine 59, and aspartate 85 each coordinate Zn(2+). Positions 85 and 117 each coordinate Fe(3+). Catalysis depends on histidine 118, which acts as the Proton donor. 2 residues coordinate Mn(2+): histidine 167 and histidine 241. Positions 167 and 241 each coordinate Fe(3+). Tyrosine 307 carries the phosphotyrosine modification. Leucine 309 bears the Leucine methyl ester mark.

The protein belongs to the PPP phosphatase family. PP-1 subfamily. PP2A consists of a common heterodimeric core enzyme, composed of PPP2CA, a 36 kDa catalytic subunit (subunit C), and PPP2R1A, a 65 kDa constant regulatory subunit (PR65 or subunit A), that associates with a variety of regulatory subunits. Proteins that associate with the core dimer include three families of regulatory subunits B (the R2/B/PR55/B55, R3/B''/PR72/PR130/PR59 and R5/B'/B56 families), the 48 kDa variable regulatory subunit, viral proteins, and cell signaling molecules. May indirectly interact with SGOL1, most probably through regulatory B56 subunits. Phosphatase component of the Integrator-PP2A (INTAC) complex, composed of the Integrator core complex and protein phosphatase 2A subunits PPP2CA and PPP2R1A. The cofactor is Mn(2+). Fe(3+) serves as cofactor. Requires Zn(2+) as cofactor. In terms of processing, reversibly methyl esterified on Leu-309 by leucine carboxyl methyltransferase 1 (LCMT1) and protein phosphatase methylesterase 1 (PPME1). Carboxyl methylation influences the affinity of the catalytic subunit for the different regulatory subunits, thereby modulating the PP2A holoenzyme's substrate specificity, enzyme activity and cellular localization. Post-translationally, phosphorylation of either threonine (by autophosphorylation-activated protein kinase) or tyrosine results in inactivation of the phosphatase. Auto-dephosphorylation has been suggested as a mechanism for reactivation.

The protein resides in the cytoplasm. The protein localises to the nucleus. It is found in the chromosome. Its subcellular location is the centromere. It localises to the cytoskeleton. The protein resides in the spindle pole. The catalysed reaction is O-phospho-L-seryl-[protein] + H2O = L-seryl-[protein] + phosphate. The enzyme catalyses O-phospho-L-threonyl-[protein] + H2O = L-threonyl-[protein] + phosphate. Its activity is regulated as follows. Inhibited by the interaction between PPP2R2A and ARPP19; this inhibition is enhanced when ARPP19 is phosphorylated. Inhibited by the interaction between PPP2R2A and PABIR1/FAM122A. PP2A is the major phosphatase for microtubule-associated proteins (MAPs). PP2A can modulate the activity of phosphorylase B kinase casein kinase 2, mitogen-stimulated S6 kinase, and MAP-2 kinase. Key mediator of a quality checkpoint during transcription elongation as part of the Integrator-PP2A (INTAC) complex. The INTAC complex drives premature transcription termination of transcripts that are unfavorably configured for transcriptional elongation: within the INTAC complex, PPP2CA catalyzes dephosphorylation of the C-terminal domain (CTD) of Pol II subunit POLR2A/RPB1 and SUPT5H/SPT5, thereby preventing transcriptional elongation. The protein is Serine/threonine-protein phosphatase 2A catalytic subunit alpha isoform (PPP2CA) of Gallus gallus (Chicken).